Reading from the N-terminus, the 370-residue chain is NADH-quinone oxidoreductase subunit D 2 (370 aa).

This sequence belongs to the complex I 49 kDa subunit family. In terms of assembly, NDH-1 is composed of 14 different subunits. Subunits NuoB, C, D, E, F, and G constitute the peripheral sector of the complex.

The protein localises to the cell inner membrane. It carries out the reaction a quinone + NADH + 5 H(+)(in) = a quinol + NAD(+) + 4 H(+)(out). NDH-1 shuttles electrons from NADH, via FMN and iron-sulfur (Fe-S) centers, to quinones in the respiratory chain. The immediate electron acceptor for the enzyme in this species is believed to be ubiquinone. Couples the redox reaction to proton translocation (for every two electrons transferred, four hydrogen ions are translocated across the cytoplasmic membrane), and thus conserves the redox energy in a proton gradient. The polypeptide is NADH-quinone oxidoreductase subunit D 2 (Solibacter usitatus (strain Ellin6076)).